The following is a 332-amino-acid chain: Phosphoenolpyruvate transferase (332 aa).

A 7,8-didemethyl-8-hydroxy-5-deazariboflavin-binding site is contributed by Asp63.

The protein belongs to the CofD family. In terms of assembly, homodimer. Requires Mg(2+) as cofactor.

It carries out the reaction enolpyruvoyl-2-diphospho-5'-guanosine + 7,8-didemethyl-8-hydroxy-5-deazariboflavin = dehydro coenzyme F420-0 + GMP + H(+). It functions in the pathway cofactor biosynthesis; coenzyme F420 biosynthesis. Catalyzes the transfer of the phosphoenolpyruvate moiety from enoylpyruvoyl-2-diphospho-5'-guanosine (EPPG) to 7,8-didemethyl-8-hydroxy-5-deazariboflavin (FO) with the formation of dehydro coenzyme F420-0 and GMP. In Nocardia farcinica (strain IFM 10152), this protein is Phosphoenolpyruvate transferase.